The following is a 228-amino-acid chain: Eukaryotic translation initiation factor 4E-1 (228 aa).

Residues 1–19 (MATAEMEKTTTFDEAEKVK) are compositionally biased toward basic and acidic residues. Positions 1–33 (MATAEMEKTTTFDEAEKVKLNANEADDEVEEGE) are disordered. Residues 24–33 (EADDEVEEGE) show a composition bias toward acidic residues. 2 EIF4G-binding regions span residues 53–56 (HPLE) and 63–99 (FDNPVAKSKQAAWGSSLRNVYTFSTVEDFWGAYNNIH). MRNA is bound by residues 71–76 (KQAAWG), Lys-103, and 121–122 (WE). Cysteines 126 and 164 form a disulfide. The segment at 147-156 (YTLLAMIGHQ) is EIF4G-binding. MRNA-binding positions include 171-176 (RGKGEK) and 216-220 (KRLDR).

The protein belongs to the eukaryotic initiation factor 4E family. In terms of assembly, EIF4F is a multi-subunit complex, the composition of which varies with external and internal environmental conditions. It is composed of at least EIF4A, EIF4E and EIF4G. EIF4E is also known to interact with other partners. In higher plants two isoforms of EIF4F have been identified, named isoform EIF4F and isoform EIF(iso)4F. Isoform EIF4F has subunits p220 and p26, whereas isoform EIF(iso)4F has subunits p82 and p28. (Microbial infection) Interacts with potyvirus viral genome-linked protein (VPg); this interaction is possible in susceptible hosts but is impaired in resistant plants. Thus the VPg of tobacco etch virus (TEV) strain HAT interacts with susceptible alleles pvr2(+), pvr2(3) and pvr2(9) but not with the resistant allele pvr2(2), the VPg of TEV strain CAA10 interacts with susceptible alleles pvr2(+), pvr2(2), pvr2(3) and pvr2(9), the VPg of potato virus Y (PVY) strain LYE84 interacts with tomato eIF4E1 and eIF4E2 as well as with the Capsicum annuum eIF4E1 susceptible allele pvr2(+) but not with resistant alleles pvr2(1), pvr2(2), pvr2(3), pvr2(4), pvr2(5), pvr2(6), pvr2(7), pvr2(8) and pvr2(9) and the VPg of PVY strain SON41 interacts with C.annuum eIF4E1 susceptible alleles pvr2(+), pvr2(1), pvr2(2), pvr2(3) and pvr2(4) but not with resistant alleles pvr2(5), pvr2(6), pvr2(7), pvr2(8) and pvr2(9). In addition, the susceptible allele pvr1(+) interacts strongly with TEV strains HAT and NW VPg while resistance alleles (pvr1, pvr1(1), and pvr1(2)) fail to bind TEV VPg. According to the redox status, the Cys-126-Cys-164 disulfide bridge may have a role in regulating protein function by affecting its ability to bind capped mRNA.

The protein localises to the nucleus. It localises to the cytoplasm. Functionally, component of the protein complex eIF4F, which is involved in the recognition of the mRNA cap, ATP-dependent unwinding of 5'-terminal secondary structure and recruitment of mRNA to the ribosome. Recognizes and binds the 7-methylguanosine-containing mRNA cap during an early step in the initiation of protein synthesis and facilitates ribosome binding by inducing the unwinding of the mRNAs secondary structures. Key component of recessive resistance to potyviruses. In terms of biological role, (Microbial infection) Susceptibility host factor required for viral infection (e.g. potato virus Y (PVY) and tobacco etch virus (TEV)) by recruiting viral RNAs to the host ribosomal complex via an interaction with viral genome-linked protein (VPg). This Capsicum annuum (Capsicum pepper) protein is Eukaryotic translation initiation factor 4E-1.